We begin with the raw amino-acid sequence, 699 residues long: Elongation factor G (699 aa).

Residues 8–283 (EHIRNIGICA…AVVDFLPSPI (276 aa)) form the tr-type G domain. GTP-binding positions include 17 to 24 (AHIDAGKT), 81 to 85 (DTPGH), and 135 to 138 (NKMD).

Belongs to the TRAFAC class translation factor GTPase superfamily. Classic translation factor GTPase family. EF-G/EF-2 subfamily.

The protein resides in the cytoplasm. Functionally, catalyzes the GTP-dependent ribosomal translocation step during translation elongation. During this step, the ribosome changes from the pre-translocational (PRE) to the post-translocational (POST) state as the newly formed A-site-bound peptidyl-tRNA and P-site-bound deacylated tRNA move to the P and E sites, respectively. Catalyzes the coordinated movement of the two tRNA molecules, the mRNA and conformational changes in the ribosome. The chain is Elongation factor G from Rickettsia felis (strain ATCC VR-1525 / URRWXCal2) (Rickettsia azadi).